The following is a 319-amino-acid chain: tRNA dimethylallyltransferase (319 aa).

ATP is bound at residue 16-23; that stretch reads GPTASGKS. Position 18-23 (18-23) interacts with substrate; it reads TASGKS. The segment at 46–49 is interaction with substrate tRNA; that stretch reads DSMV.

Belongs to the IPP transferase family. Monomer. Mg(2+) is required as a cofactor.

The catalysed reaction is adenosine(37) in tRNA + dimethylallyl diphosphate = N(6)-dimethylallyladenosine(37) in tRNA + diphosphate. Its function is as follows. Catalyzes the transfer of a dimethylallyl group onto the adenine at position 37 in tRNAs that read codons beginning with uridine, leading to the formation of N6-(dimethylallyl)adenosine (i(6)A). This Cutibacterium acnes (strain DSM 16379 / KPA171202) (Propionibacterium acnes) protein is tRNA dimethylallyltransferase.